Here is a 156-residue protein sequence, read N- to C-terminus: Small ribosomal subunit protein uS7 (156 aa).

This sequence belongs to the universal ribosomal protein uS7 family. In terms of assembly, part of the 30S ribosomal subunit. Contacts proteins S9 and S11.

Its function is as follows. One of the primary rRNA binding proteins, it binds directly to 16S rRNA where it nucleates assembly of the head domain of the 30S subunit. Is located at the subunit interface close to the decoding center, probably blocks exit of the E-site tRNA. In Shewanella baltica (strain OS223), this protein is Small ribosomal subunit protein uS7.